The chain runs to 220 residues: Glutathione S-transferase U26 (220 aa).

Positions 4 to 83 constitute a GST N-terminal domain; it reads DQVILLDYWP…YIDEVWSDAS (80 aa). Residues 14–15, 40–41, 54–55, and 67–68 each bind glutathione; these read SM, VK, KI, and ES. Positions 89–210 constitute a GST C-terminal domain; that stretch reads DPYQKSRARF…ADSDRIIEYV (122 aa).

This sequence belongs to the GST superfamily. Tau family.

The protein resides in the cytoplasm. The protein localises to the cytosol. It catalyses the reaction RX + glutathione = an S-substituted glutathione + a halide anion + H(+). Its function is as follows. In vitro, possesses glutathione S-transferase activity toward 1-chloro-2,4-dinitrobenzene (CDNB). May be involved in the conjugation of reduced glutathione to a wide number of exogenous and endogenous hydrophobic electrophiles and have a detoxification role against certain herbicides. This is Glutathione S-transferase U26 (GSTU26) from Arabidopsis thaliana (Mouse-ear cress).